Here is a 189-residue protein sequence, read N- to C-terminus: MVKVIASSVRKGNVLDVDGKLYVVLTAQNFHPGKGTPVTQVDMRRIVDGVKVSERWRTTEQVERAFVEDVNFQYLYEDGEGFHFMNPATYDQVVVSAETMGDQKAYLQEGMTCILSIHEGVPLALELPRHVTLEIVETEPVVKGQTASSSYKPAMLSNGIRTSVPPHIDAGTRVVIATEDNSYVERAKD.

It belongs to the elongation factor P family.

Its subcellular location is the cytoplasm. The protein operates within protein biosynthesis; polypeptide chain elongation. In terms of biological role, involved in peptide bond synthesis. Stimulates efficient translation and peptide-bond synthesis on native or reconstituted 70S ribosomes in vitro. Probably functions indirectly by altering the affinity of the ribosome for aminoacyl-tRNA, thus increasing their reactivity as acceptors for peptidyl transferase. This chain is Elongation factor P, found in Rhizobium etli (strain ATCC 51251 / DSM 11541 / JCM 21823 / NBRC 15573 / CFN 42).